A 224-amino-acid polypeptide reads, in one-letter code: 7-cyano-7-deazaguanine synthase (224 aa).

11–21 contributes to the ATP binding site; it reads FSGGQDSTTCL. Residues Cys190, Cys199, Cys202, and Cys205 each coordinate Zn(2+).

It belongs to the QueC family. Zn(2+) serves as cofactor.

It catalyses the reaction 7-carboxy-7-deazaguanine + NH4(+) + ATP = 7-cyano-7-deazaguanine + ADP + phosphate + H2O + H(+). The protein operates within purine metabolism; 7-cyano-7-deazaguanine biosynthesis. Its function is as follows. Catalyzes the ATP-dependent conversion of 7-carboxy-7-deazaguanine (CDG) to 7-cyano-7-deazaguanine (preQ(0)). This chain is 7-cyano-7-deazaguanine synthase, found in Parabacteroides distasonis (strain ATCC 8503 / DSM 20701 / CIP 104284 / JCM 5825 / NCTC 11152).